We begin with the raw amino-acid sequence, 147 residues long: UPF0306 protein KPK_0562 (147 aa).

It belongs to the UPF0306 family.

In Klebsiella pneumoniae (strain 342), this protein is UPF0306 protein KPK_0562.